The primary structure comprises 343 residues: Heat-inducible transcription repressor HrcA (343 aa).

Belongs to the HrcA family.

Functionally, negative regulator of class I heat shock genes (grpE-dnaK-dnaJ and groELS operons). Prevents heat-shock induction of these operons. This chain is Heat-inducible transcription repressor HrcA, found in Thermoanaerobacter sp. (strain X514).